A 468-amino-acid polypeptide reads, in one-letter code: MTSQLHKKGEAWSARFSEPMSELVKRYTSSVFFDKRLALVDIEGSLAHASMLAAQKIISADDLAAIQRGMAQIQGEIERGEFEWQLDLEDVHLNIEARLTALIGDAGKRLHTGRSRNDQVATDIRLWLRGEIDRIGDLLKGLRSALLDLAEQNADTIMPGFTHLQVAQPVTFGHHLLAYVEMFSRDAERMLDTRKRVNRLPLGAAALAGTSYPIDRHAVAKTLGFDGICANSLDAVSDRDFAIEFTAASALVMTHVSRFSEELVLWMSPRVGFIDIADRFCTGSSIMPQKKNPDVPELARGKTGRVNGHLMALLTLMKGQPLAYNKDNQEDKEPLFDTVDTVADTLRIFAEMVAGITVKSENMRGAALQGFSTATDLADYLVKRGLPFRDAHEAVAHAVKVCDDRGCDLSDLTLDEMKAELPNVAALLGDDVFGYLTLEGSVASRNHAGGTAPDQVRAAIAAARAALG.

Belongs to the lyase 1 family. Argininosuccinate lyase subfamily.

It localises to the cytoplasm. It carries out the reaction 2-(N(omega)-L-arginino)succinate = fumarate + L-arginine. It participates in amino-acid biosynthesis; L-arginine biosynthesis; L-arginine from L-ornithine and carbamoyl phosphate: step 3/3. This chain is Argininosuccinate lyase, found in Paraburkholderia phymatum (strain DSM 17167 / CIP 108236 / LMG 21445 / STM815) (Burkholderia phymatum).